The following is a 402-amino-acid chain: Guanine nucleotide-binding protein subunit alpha-1 (402 aa).

Polar residues predominate over residues 1–12 (MGCSASKPSEPS). The tract at residues 1–70 (MGCSASKPSE…PEPQKPAEPA (70 aa)) is disordered. Residue Gly-2 is the site of N-myristoyl glycine attachment. Cys-3 carries S-palmitoyl cysteine lipidation. The segment covering 23 to 33 (KKVEQVPEPKP) has biased composition (basic and acidic residues). Over residues 34-69 (EPQPQPEPQPQPEPPKPAEPAPAPAPAPEPQKPAEP) the composition is skewed to pro residues. One can recognise a G-alpha domain in the interval 82–402 (EAYGLLLCGA…FISDKYYQDA (321 aa)). A G1 motif region spans residues 85–98 (GLLLCGAGESGKTT). Residues Glu-93, Ser-94, Gly-95, Lys-96, Thr-97, Thr-98, Asp-198, Leu-223, Ser-229, Gly-251, Asn-317, Lys-318, Asp-320, and Ala-377 each coordinate GTP. Thr-97 is a Mg(2+) binding site. Positions 221–229 (DVLRARIRS) are G2 motif. Residue Ser-229 coordinates Mg(2+). The tract at residues 244-253 (IRIFDVGGQK) is G3 motif. The segment at 313 to 320 (FLVCNKFD) is G4 motif. Residues 375-380 (IVALNG) are G5 motif.

It belongs to the G-alpha family. As to quaternary structure, g proteins are composed of 3 units; alpha, beta and gamma. The alpha chain contains the guanine nucleotide binding site. Requires Mg(2+) as cofactor.

The protein resides in the cytoplasm. Its subcellular location is the perinuclear region. It localises to the endomembrane system. Guanine nucleotide-binding proteins (G proteins) are involved as modulators or transducers in various transmembrane signaling systems. In Trichomonas vaginalis, this protein is Guanine nucleotide-binding protein subunit alpha-1 (GA1).